Consider the following 97-residue polypeptide: Putative pterin-4-alpha-carbinolamine dehydratase (97 aa).

This sequence belongs to the pterin-4-alpha-carbinolamine dehydratase family.

The enzyme catalyses (4aS,6R)-4a-hydroxy-L-erythro-5,6,7,8-tetrahydrobiopterin = (6R)-L-erythro-6,7-dihydrobiopterin + H2O. The sequence is that of Putative pterin-4-alpha-carbinolamine dehydratase from Rhizorhabdus wittichii (strain DSM 6014 / CCUG 31198 / JCM 15750 / NBRC 105917 / EY 4224 / RW1) (Sphingomonas wittichii).